A 404-amino-acid chain; its full sequence is MSGYEKPSRGWGFCALSPVLLSLLMAAPLGLLGEETRQVSLKVISNRLDFSQNLLHIRAVGTNSTLHYVWSSLGPPAVLLVATNTPNSTLSVNWSLLLSSDPDGGLMVLPEESIQFSSALVFTRLFEFDSTNMSDAASRPLGKSYPPYSLANFSWNNITDSLDPATLSATFRGHPIRDPTGAFTNGSLAFRVQAFSTSGRPAQPPRLLHSADTCQLEVALVGASPRGNRSLFGLEVATLGQGPGCPSMQEQHSIDDEYTPAVFQLDQLLWGSLPSGFMQWRPVAFSQKRGSRDSAMPCQSSPLHPTLAYLLPQSPIVRAFFKTQDHSCAFNLTFGASTGPGYWDQHYLSWSVLLGVGTPPVDALSPLVLGIMAVALGAPALMLLAGGLFLLLGRKRDSEYQSIN.

Positions 1–26 are cleaved as a signal peptide; that stretch reads MSGYEKPSRGWGFCALSPVLLSLLMA. The Lumenal segment spans residues 27–370; that stretch reads APLGLLGEET…VDALSPLVLG (344 aa). Residues Asn63, Asn132, Asn157, Asn185, and Asn228 are each glycosylated (N-linked (GlcNAc...) asparagine). A helical membrane pass occupies residues 371 to 391; that stretch reads IMAVALGAPALMLLAGGLFLL. Residues 392-404 are Cytoplasmic-facing; that stretch reads LGRKRDSEYQSIN. Residues 400 to 404 carry the Lysosomal targeting motif motif; the sequence is YQSIN.

The protein belongs to the GLMP family. In terms of assembly, interacts (via lumenal domain) with lysosomal protein MFSD1; the interaction starts while both proteins are still in the endoplasmic reticulum and is required for stabilization of MFSD1 in lysosomes but has no direct effect on its targeting to lysosomes or transporter activity. In terms of processing, highly N-glycosylated. N-glycosylation is essential for GLMP stability and for MFSD1 lysosomal localization.

The protein localises to the lysosome membrane. Required to protect lysosomal transporter MFSD1 from lysosomal proteolysis and for MFSD1 lysosomal localization. This Bos taurus (Bovine) protein is Glycosylated lysosomal membrane protein.